We begin with the raw amino-acid sequence, 179 residues long: Lebocin-4 (179 aa).

The N-terminal stretch at 1–16 is a signal peptide; that stretch reads MYKFLVFSSVLVLFFA. A propeptide spanning residues 17 to 120 is cleaved from the precursor; that stretch reads QASCQRFIQP…RPIESHRNTR (104 aa). Threonine 135 is a glycosylation site (O-linked (GalNAc...) threonine). Residues 153–179 constitute a propeptide that is removed on maturation; the sequence is RRHASDDQEELRHHNEHFLIPRDILQD.

The protein belongs to the lebocin family. O-glycosylation is important for the antibacterial activity of lebocin. Hemolymph. Produced in fat body.

It localises to the secreted. Antibacterial peptide. The polypeptide is Lebocin-4 (LEB4) (Bombyx mori (Silk moth)).